A 285-amino-acid chain; its full sequence is Bifunctional protein FolD (285 aa).

Residues 166-168 (GAS), S191, and I232 each bind NADP(+).

Belongs to the tetrahydrofolate dehydrogenase/cyclohydrolase family. As to quaternary structure, homodimer.

It carries out the reaction (6R)-5,10-methylene-5,6,7,8-tetrahydrofolate + NADP(+) = (6R)-5,10-methenyltetrahydrofolate + NADPH. It catalyses the reaction (6R)-5,10-methenyltetrahydrofolate + H2O = (6R)-10-formyltetrahydrofolate + H(+). It participates in one-carbon metabolism; tetrahydrofolate interconversion. Its function is as follows. Catalyzes the oxidation of 5,10-methylenetetrahydrofolate to 5,10-methenyltetrahydrofolate and then the hydrolysis of 5,10-methenyltetrahydrofolate to 10-formyltetrahydrofolate. The sequence is that of Bifunctional protein FolD from Edwardsiella ictaluri (strain 93-146).